Here is a 118-residue protein sequence, read N- to C-terminus: Holin-like protein CidA 2 (118 aa).

4 helical membrane passes run 4 to 26 (VTLLLQVGVLYVFSLVGTWIQGV), 33 to 52 (GSLIGMLILFLLLSTRVLPL), 62 to 84 (LIVFLPLFLIPSTTGLMEYGSFL), and 91 to 113 (IFLLVVASTVVTLIVSGYISQLL).

This sequence belongs to the CidA/LrgA family. CidA subfamily.

Its subcellular location is the cell membrane. In terms of biological role, increases the activity of extracellular murein hydrolases possibly by mediating their export via hole formation. Inhibited by the antiholin-like proteins LrgAB. In an unstressed cell, the LrgAB products probably inhibit the function of the CidA protein. When a cell is stressed by the addition of antibiotics or by other factors in the environment, CidA possibly oligomerizes within the bacterial cell membrane, creating lesions that disrupt the proton motive force, which in turn results in loss of cell viability. These lesions are also hypothesized to regulate the subsequent cell lysis by either allowing the murein hydrolases access to the cell wall substrate and/or regulating their activity by a possible change in the cell wall pH that results from loss of membrane potential. The sequence is that of Holin-like protein CidA 2 (cidA2) from Bacillus cereus (strain ATCC 14579 / DSM 31 / CCUG 7414 / JCM 2152 / NBRC 15305 / NCIMB 9373 / NCTC 2599 / NRRL B-3711).